We begin with the raw amino-acid sequence, 497 residues long: Serine carboxypeptidase-like 20 (497 aa).

The first 29 residues, 1–29 (MSIITMVWLMKVFVFVTLLSLVFVITESA), serve as a signal peptide directing secretion. Disulfide bonds link C90-C386, C254-C266, and C289-C353. 2 N-linked (GlcNAc...) asparagine glycosylation sites follow: N111 and N146. S186 is a catalytic residue. Residue N249 is glycosylated (N-linked (GlcNAc...) asparagine). N-linked (GlcNAc...) asparagine glycosylation is present at N405. Residue D421 is part of the active site. Residue N463 is glycosylated (N-linked (GlcNAc...) asparagine). The active site involves H474. A Microbody targeting signal motif is present at residues 495 to 497 (SKI).

The protein belongs to the peptidase S10 family. Ubiquitous.

It is found in the secreted. In terms of biological role, probable carboxypeptidase. This is Serine carboxypeptidase-like 20 (SCPL20) from Arabidopsis thaliana (Mouse-ear cress).